We begin with the raw amino-acid sequence, 586 residues long: Beta-fructofuranosidase, insoluble isoenzyme 3 (586 aa).

Positions Met-1–Ala-26 are cleaved as a signal peptide. Residue Asp-61 is part of the active site. N-linked (GlcNAc...) asparagine glycosylation is found at Asn-154, Asn-179, Asn-341, Asn-390, and Asn-479.

It belongs to the glycosyl hydrolase 32 family.

It is found in the secreted. Its subcellular location is the extracellular space. The protein localises to the apoplast. It localises to the cell wall. The catalysed reaction is Hydrolysis of terminal non-reducing beta-D-fructofuranoside residues in beta-D-fructofuranosides.. This chain is Beta-fructofuranosidase, insoluble isoenzyme 3 (CIN3), found in Oryza sativa subsp. indica (Rice).